A 196-amino-acid polypeptide reads, in one-letter code: Small ribosomal subunit protein uS4c (196 aa).

The S4 RNA-binding domain occupies 89 to 149; sequence MRLDNILFRL…DKQRSKALIQ (61 aa).

It belongs to the universal ribosomal protein uS4 family. As to quaternary structure, part of the 30S ribosomal subunit. Contacts protein S5. The interaction surface between S4 and S5 is involved in control of translational fidelity.

The protein resides in the plastid. It localises to the chloroplast. Functionally, one of the primary rRNA binding proteins, it binds directly to 16S rRNA where it nucleates assembly of the body of the 30S subunit. In terms of biological role, with S5 and S12 plays an important role in translational accuracy. The chain is Small ribosomal subunit protein uS4c (rps4) from Asparagus maritimus (Sea asparagus).